We begin with the raw amino-acid sequence, 277 residues long: Large ribosomal subunit protein uL2 (277 aa).

Residues 199-277 (DHMNTSIGKA…ILLSRHKRKK (79 aa)) are disordered. Basic residues predominate over residues 209-220 (GRNRWLGRKPHN).

This sequence belongs to the universal ribosomal protein uL2 family. As to quaternary structure, part of the 50S ribosomal subunit. Forms a bridge to the 30S subunit in the 70S ribosome.

Functionally, one of the primary rRNA binding proteins. Required for association of the 30S and 50S subunits to form the 70S ribosome, for tRNA binding and peptide bond formation. It has been suggested to have peptidyltransferase activity; this is somewhat controversial. Makes several contacts with the 16S rRNA in the 70S ribosome. The chain is Large ribosomal subunit protein uL2 from Bradyrhizobium diazoefficiens (strain JCM 10833 / BCRC 13528 / IAM 13628 / NBRC 14792 / USDA 110).